The primary structure comprises 197 residues: UPF0301 protein Adeh_3962 (197 aa).

Belongs to the UPF0301 (AlgH) family.

In Anaeromyxobacter dehalogenans (strain 2CP-C), this protein is UPF0301 protein Adeh_3962.